The following is a 1930-amino-acid chain: Transport and Golgi organization protein 1 homolog (1930 aa).

The first 24 residues, Met-1–Ser-24, serve as a signal peptide directing secretion. The Lumenal segment spans residues Asp-25–Ser-1171. The SH3 domain occupies Met-45–Lys-107. 5 disordered regions span residues Leu-144–Thr-263, Glu-317–Lys-496, Leu-547–Gln-737, Thr-754–Ile-891, and Thr-1018–Ala-1149. Basic and acidic residues predominate over residues Glu-152–Ser-189. Positions Ser-197–Glu-211 are enriched in polar residues. Ser-229 is modified (phosphoserine). Over residues Glu-247–Ala-256 the composition is skewed to polar residues. A compositionally biased stretch (acidic residues) spans Glu-317–Asp-330. The span at Ser-338–Glu-368 shows a compositional bias: basic and acidic residues. An N-linked (GlcNAc...) asparagine glycan is attached at Asn-360. The span at Asp-420 to Val-430 shows a compositional bias: acidic residues. Basic and acidic residues-rich tracts occupy residues Glu-431–Glu-442 and Gly-451–Lys-461. N-linked (GlcNAc...) asparagine glycosylation occurs at Asn-631. The span at Glu-661–Glu-677 shows a compositional bias: basic and acidic residues. Positions Asp-692 to Asp-701 are enriched in acidic residues. Polar residues predominate over residues Val-715–Ser-726. Residues Glu-791–Ala-800 show a composition bias toward basic and acidic residues. At Ser-856 the chain carries Phosphoserine. The segment covering Gly-1030–Gln-1039 has biased composition (basic and acidic residues). Polar residues-rich tracts occupy residues Pro-1040–Leu-1054 and Gln-1115–Ser-1127. The span at Gln-1128–Asp-1137 shows a compositional bias: basic and acidic residues. An intramembrane segment occupies Ala-1172–Pro-1192. Topologically, residues Asp-1193–Tyr-1202 are lumenal. A helical membrane pass occupies residues Gly-1203–Phe-1223. The Cytoplasmic segment spans residues Ser-1224–Pro-1930. Coiled-coil stretches lie at residues Tyr-1236 to Asp-1329 and Leu-1359 to Leu-1422. The interval Val-1238–Pro-1677 is mediates interaction with MIA2. The tract at residues Glu-1447–Glu-1472 is disordered. At Ser-1458 the chain carries Phosphoserine. Positions Asn-1514 to Met-1662 form a coiled coil. Disordered regions lie at residues Ile-1669–Met-1796, Pro-1801–Arg-1820, and Ala-1840–Pro-1930. A compositionally biased stretch (polar residues) spans Pro-1677–Phe-1694. A phosphoserine mark is found at Ser-1693 and Ser-1705. Positions Pro-1706 to Arg-1715 are enriched in pro residues. Basic and acidic residues predominate over residues Ser-1722–Leu-1738. A phosphoserine mark is found at Ser-1733, Ser-1754, Ser-1766, and Ser-1770. The segment covering Pro-1760–Lys-1773 has biased composition (low complexity). The tract at residues Asp-1776–Pro-1930 is proline-rich domain (PRD); mediates interaction with the COPII coat subunits SEC23A and SEC23B. A compositionally biased stretch (pro residues) spans Pro-1801–Gln-1811. Residue Arg-1805 is modified to Asymmetric dimethylarginine. Residues Pro-1809–Ser-1869 are SEC16A-interacting region (SIR); required for its localization to endoplasmic reticulum exit sites and for its interaction with SEC16A. Residues Gly-1846 to Leu-1858 show a composition bias toward basic and acidic residues. The span at Arg-1881–Ala-1898 shows a compositional bias: pro residues. Ser-1915 is subject to Phosphoserine. Over residues Ser-1915–Pro-1930 the composition is skewed to polar residues.

Belongs to the MIA/OTOR family. Tango1 subfamily. In terms of assembly, interacts with MIA2. Interacts (via SH3 domain) with COL7A1. Interacts with the COPII coat subunits SEC23A, SEC23B and maybe SEC24C. May interact with APOB and MIA2. Interacts with SEC16A.

The protein localises to the endoplasmic reticulum membrane. Plays a role in the transport of cargos that are too large to fit into COPII-coated vesicles and require specific mechanisms to be incorporated into membrane-bound carriers and exported from the endoplasmic reticulum. This protein is required for collagen VII (COL7A1) secretion by loading COL7A1 into transport carriers. It may participate in cargo loading of COL7A1 at endoplasmic reticulum exit sites by binding to COPII coat subunits Sec23/24 and guiding SH3-bound COL7A1 into a growing carrier. Does not play a role in global protein secretion and is apparently specific to COL7A1 cargo loading. However, it may participate in secretion of other proteins in cells that do not secrete COL7A1. It is also specifically required for the secretion of lipoproteins by participating in their export from the endoplasmic reticulum. Required for correct assembly of COPII coat components at endoplasmic reticulum exit sites (ERES) and for the localization of SEC16A and membrane-bound ER-resident complexes consisting of MIA2 and PREB/SEC12 to ERES. The polypeptide is Transport and Golgi organization protein 1 homolog (Mus musculus (Mouse)).